A 93-amino-acid chain; its full sequence is Large ribosomal subunit protein bL27 (93 aa).

The protein belongs to the bacterial ribosomal protein bL27 family.

This Trichormus variabilis (strain ATCC 29413 / PCC 7937) (Anabaena variabilis) protein is Large ribosomal subunit protein bL27.